We begin with the raw amino-acid sequence, 466 residues long: 3-isopropylmalate dehydratase large subunit (466 aa).

3 residues coordinate [4Fe-4S] cluster: C347, C407, and C410.

The protein belongs to the aconitase/IPM isomerase family. LeuC type 1 subfamily. In terms of assembly, heterodimer of LeuC and LeuD. It depends on [4Fe-4S] cluster as a cofactor.

It catalyses the reaction (2R,3S)-3-isopropylmalate = (2S)-2-isopropylmalate. Its pathway is amino-acid biosynthesis; L-leucine biosynthesis; L-leucine from 3-methyl-2-oxobutanoate: step 2/4. Catalyzes the isomerization between 2-isopropylmalate and 3-isopropylmalate, via the formation of 2-isopropylmaleate. This Escherichia fergusonii (strain ATCC 35469 / DSM 13698 / CCUG 18766 / IAM 14443 / JCM 21226 / LMG 7866 / NBRC 102419 / NCTC 12128 / CDC 0568-73) protein is 3-isopropylmalate dehydratase large subunit.